Reading from the N-terminus, the 538-residue chain is MFQDRLIIFDTTLRDGEQSPGATLNADEKVEIARQLARLGVDVIEAGFAYASPGDFEAVERVARTVGTEDGPVICSLARAIRSDIQAAAEAIRPAARGRIHTFISTSDIHLEHQLRKSRAEVLAIAAEMVAFAKGFVDDVEFSPMDAGRSAPEYLYRVLEAAIAAGATTVNIPDTVGYLTPAEFGGLIRGITQNVRGIERAVISVHCHNDLGLAVANSLAAIENGARQIECTVNGIGERAGNCSLEEIVMALHVRRQFFNPIFGRPADSTVPLSTIDTRQIYKSSRLVSHLTGMLVQPNKAIVGANAFAHESGIHQDGVLKNRLTYEIMDAETVGVNENRIVLGKHSGRNAFRTRLVELGYELGDADLNRAFLRFKELADKKKTVSDWDIEAVISDEIRLIPEAYRLEQVQVSCGEPGLPTATVRLTGPDGVERVDAAVGTGPVDAVYKAINRLIELPNELIEFSVQSVTAGIDAMGEVTIRVRQDGRTFSGHAANTDIIVASARAYLNALNKLHFALAHPTHSGGALAHPDAAAQKL.

The region spanning 6–277 (LIIFDTTLRD…DSTVPLSTID (272 aa)) is the Pyruvate carboxyltransferase domain. Residues Asp-15, His-206, His-208, and Asn-242 each coordinate Mn(2+). Residues 406-538 (RLEQVQVSCG…AHPDAAAQKL (133 aa)) are regulatory domain.

It belongs to the alpha-IPM synthase/homocitrate synthase family. LeuA type 1 subfamily. Homodimer. Mn(2+) is required as a cofactor.

The protein localises to the cytoplasm. It catalyses the reaction 3-methyl-2-oxobutanoate + acetyl-CoA + H2O = (2S)-2-isopropylmalate + CoA + H(+). The protein operates within amino-acid biosynthesis; L-leucine biosynthesis; L-leucine from 3-methyl-2-oxobutanoate: step 1/4. In terms of biological role, catalyzes the condensation of the acetyl group of acetyl-CoA with 3-methyl-2-oxobutanoate (2-ketoisovalerate) to form 3-carboxy-3-hydroxy-4-methylpentanoate (2-isopropylmalate). The polypeptide is 2-isopropylmalate synthase (Gloeobacter violaceus (strain ATCC 29082 / PCC 7421)).